Consider the following 372-residue polypeptide: GTPase Obg (372 aa).

The Obg domain occupies 1 to 159 (MKFIDEARIE…RMLKLELKVL (159 aa)). Positions 128–147 (LHFKSSTNRAPRQKTDGKPG) are disordered. The OBG-type G domain occupies 160 to 334 (ADVGLLGMPN…LVYAIHDYLV (175 aa)). Residues 166–173 (GMPNAGKS), 191–195 (FTTLA), 213–216 (DIPG), 284–287 (NKLD), and 315–317 (SAL) each bind GTP. Mg(2+) contacts are provided by S173 and T193.

The protein belongs to the TRAFAC class OBG-HflX-like GTPase superfamily. OBG GTPase family. As to quaternary structure, monomer. The cofactor is Mg(2+).

It localises to the cytoplasm. An essential GTPase which binds GTP, GDP and possibly (p)ppGpp with moderate affinity, with high nucleotide exchange rates and a fairly low GTP hydrolysis rate. Plays a role in control of the cell cycle, stress response, ribosome biogenesis and in those bacteria that undergo differentiation, in morphogenesis control. The chain is GTPase Obg from Burkholderia mallei (strain NCTC 10247).